A 378-amino-acid polypeptide reads, in one-letter code: Anhydro-N-acetylmuramic acid kinase (378 aa).

Position 23-30 (23-30 (GTSMDGAD)) interacts with ATP.

The protein belongs to the anhydro-N-acetylmuramic acid kinase family.

It carries out the reaction 1,6-anhydro-N-acetyl-beta-muramate + ATP + H2O = N-acetyl-D-muramate 6-phosphate + ADP + H(+). It participates in amino-sugar metabolism; 1,6-anhydro-N-acetylmuramate degradation. It functions in the pathway cell wall biogenesis; peptidoglycan recycling. Its function is as follows. Catalyzes the specific phosphorylation of 1,6-anhydro-N-acetylmuramic acid (anhMurNAc) with the simultaneous cleavage of the 1,6-anhydro ring, generating MurNAc-6-P. Is required for the utilization of anhMurNAc either imported from the medium or derived from its own cell wall murein, and thus plays a role in cell wall recycling. In Bordetella bronchiseptica (strain ATCC BAA-588 / NCTC 13252 / RB50) (Alcaligenes bronchisepticus), this protein is Anhydro-N-acetylmuramic acid kinase.